The sequence spans 311 residues: 4-hydroxy-3-methylbut-2-enyl diphosphate reductase (311 aa).

Position 12 (Cys-12) interacts with [4Fe-4S] cluster. His-41 and His-74 together coordinate (2E)-4-hydroxy-3-methylbut-2-enyl diphosphate. Dimethylallyl diphosphate contacts are provided by His-41 and His-74. 2 residues coordinate isopentenyl diphosphate: His-41 and His-74. Cys-96 contacts [4Fe-4S] cluster. His-124 is a binding site for (2E)-4-hydroxy-3-methylbut-2-enyl diphosphate. His-124 contacts dimethylallyl diphosphate. Isopentenyl diphosphate is bound at residue His-124. The active-site Proton donor is Glu-126. (2E)-4-hydroxy-3-methylbut-2-enyl diphosphate is bound at residue Thr-168. Cys-198 lines the [4Fe-4S] cluster pocket. Residues Ser-226, Ser-227, Asn-228, and Ser-270 each coordinate (2E)-4-hydroxy-3-methylbut-2-enyl diphosphate. Dimethylallyl diphosphate contacts are provided by Ser-226, Ser-227, Asn-228, and Ser-270. Ser-226, Ser-227, Asn-228, and Ser-270 together coordinate isopentenyl diphosphate.

It belongs to the IspH family. Requires [4Fe-4S] cluster as cofactor.

It carries out the reaction isopentenyl diphosphate + 2 oxidized [2Fe-2S]-[ferredoxin] + H2O = (2E)-4-hydroxy-3-methylbut-2-enyl diphosphate + 2 reduced [2Fe-2S]-[ferredoxin] + 2 H(+). It catalyses the reaction dimethylallyl diphosphate + 2 oxidized [2Fe-2S]-[ferredoxin] + H2O = (2E)-4-hydroxy-3-methylbut-2-enyl diphosphate + 2 reduced [2Fe-2S]-[ferredoxin] + 2 H(+). The protein operates within isoprenoid biosynthesis; dimethylallyl diphosphate biosynthesis; dimethylallyl diphosphate from (2E)-4-hydroxy-3-methylbutenyl diphosphate: step 1/1. It functions in the pathway isoprenoid biosynthesis; isopentenyl diphosphate biosynthesis via DXP pathway; isopentenyl diphosphate from 1-deoxy-D-xylulose 5-phosphate: step 6/6. In terms of biological role, catalyzes the conversion of 1-hydroxy-2-methyl-2-(E)-butenyl 4-diphosphate (HMBPP) into a mixture of isopentenyl diphosphate (IPP) and dimethylallyl diphosphate (DMAPP). Acts in the terminal step of the DOXP/MEP pathway for isoprenoid precursor biosynthesis. The polypeptide is 4-hydroxy-3-methylbut-2-enyl diphosphate reductase (Alcanivorax borkumensis (strain ATCC 700651 / DSM 11573 / NCIMB 13689 / SK2)).